Here is a 354-residue protein sequence, read N- to C-terminus: Guanine nucleotide-binding protein G(i) subunit alpha (354 aa).

Gly-2 carries the N-myristoyl glycine lipid modification. Cys-3 carries S-palmitoyl cysteine lipidation. Positions 32–354 constitute a G-alpha domain; sequence REVKLLLLGA…KNNLKDCGLF (323 aa). The G1 motif stretch occupies residues 35-48; sequence KLLLLGAGESGKST. Residues 40-47, 175-181, 200-204, 269-272, and Ala-326 each bind GTP; these read GAGESGKS, LRTRVKT, DVGGQ, and NKKD. Mg(2+) is bound by residues Ser-47 and Thr-181. The segment at 173 to 181 is G2 motif; the sequence is DVLRTRVKT. The segment at 196–205 is G3 motif; that stretch reads FKMFDVGGQR. The G4 motif stretch occupies residues 265-272; it reads ILFLNKKD. The G5 motif stretch occupies residues 324 to 329; it reads TCATDT.

It belongs to the G-alpha family. G(i/o/t/z) subfamily. In terms of assembly, g proteins are composed of 3 units; alpha, beta and gamma. The alpha chain contains the guanine nucleotide binding site.

Functionally, guanine nucleotide-binding proteins (G proteins) are involved as modulators or transducers in various transmembrane signaling systems. This G protein is involved in 1-methyladenine-induced oocyte maturation. The sequence is that of Guanine nucleotide-binding protein G(i) subunit alpha from Patiria pectinifera (Starfish).